The sequence spans 260 residues: Small ribosomal subunit protein uS2 (260 aa).

This sequence belongs to the universal ribosomal protein uS2 family.

The protein is Small ribosomal subunit protein uS2 of Staphylococcus carnosus (strain TM300).